Reading from the N-terminus, the 1280-residue chain is Multidrug resistance protein 1 (1280 aa).

Over 1 to 72 (MSRAHAAYAN…YADATDRVLM (72 aa)) the chain is Cytoplasmic. Residues 72-357 (MIAGTAFAVA…VAPSRTAFTE (286 aa)) enclose the ABC transmembrane type-1 1 domain. The next 6 membrane-spanning stretches (helical) occupy residues 73 to 93 (IAGT…SFIF), 120 to 140 (YVGI…TVAA), 189 to 209 (KLSQ…AGFV), 216 to 236 (LMMI…GSIV), 297 to 317 (LSAA…FFFG), and 326 to 345 (RDMA…SFGL). Over 346-712 (GFVAPSRTAF…MRMNKDKAWA (367 aa)) the chain is Cytoplasmic. Residues 391 to 634 (IEFRNVRFAY…DGEFAAVAKM (244 aa)) form the ABC transporter 1 domain. 426–433 (GASGCGKS) provides a ligand contact to ATP. 6 helical membrane-spanning segments follow: residues 713-733 (VALG…SSIV), 762-781 (PLFI…HGFY), 837-857 (IGLK…GFIY), 858-878 (QWKL…CSLT), 938-958 (IIAG…YALC), and 976-996 (VMIA…AGAF). Residues 713 to 1002 (VALGILSSVV…AGAFATKLAD (290 aa)) enclose the ABC transmembrane type-1 2 domain. The ABC transporter 2 domain occupies 1036-1274 (IEYRNVQFIY…GGEYKTRYDL (239 aa)). 1071-1078 (GQTGCGKS) is an ATP binding site. Residue Asn1113 is glycosylated (N-linked (GlcNAc...) asparagine).

Belongs to the ABC transporter superfamily. ABCB family. Multidrug resistance exporter (TC 3.A.1.201) subfamily.

Its subcellular location is the membrane. It catalyses the reaction ATP + H2O + xenobioticSide 1 = ADP + phosphate + xenobioticSide 2.. In terms of biological role, energy-dependent efflux pump responsible for decreased drug accumulation in multi-drug-resistant cells. Confers vinblastine resistance. This chain is Multidrug resistance protein 1 (MDR1), found in Leishmania enriettii.